The following is a 220-amino-acid chain: Small ribosomal subunit protein uS3 (220 aa).

The region spanning 24–93 (IKEFLEYRLS…NPQIDVIDVS (70 aa)) is the KH type-2 domain.

This sequence belongs to the universal ribosomal protein uS3 family. In terms of assembly, part of the 30S ribosomal subunit.

Binds the lower part of the 30S subunit head. The protein is Small ribosomal subunit protein uS3 of Pyrobaculum arsenaticum (strain DSM 13514 / JCM 11321 / PZ6).